The chain runs to 133 residues: Holo-[acyl-carrier-protein] synthase (133 aa).

Positions 8 and 58 each coordinate Mg(2+).

Belongs to the P-Pant transferase superfamily. AcpS family. It depends on Mg(2+) as a cofactor.

Its subcellular location is the cytoplasm. The catalysed reaction is apo-[ACP] + CoA = holo-[ACP] + adenosine 3',5'-bisphosphate + H(+). In terms of biological role, transfers the 4'-phosphopantetheine moiety from coenzyme A to a Ser of acyl-carrier-protein. The sequence is that of Holo-[acyl-carrier-protein] synthase from Sphingopyxis alaskensis (strain DSM 13593 / LMG 18877 / RB2256) (Sphingomonas alaskensis).